We begin with the raw amino-acid sequence, 229 residues long: Large ribosomal subunit protein uL1 (229 aa).

This sequence belongs to the universal ribosomal protein uL1 family. Part of the 50S ribosomal subunit.

Binds directly to 23S rRNA. The L1 stalk is quite mobile in the ribosome, and is involved in E site tRNA release. In terms of biological role, protein L1 is also a translational repressor protein, it controls the translation of the L11 operon by binding to its mRNA. This Streptococcus agalactiae serotype Ia (strain ATCC 27591 / A909 / CDC SS700) protein is Large ribosomal subunit protein uL1.